The primary structure comprises 403 residues: TBC1 domain family member 20 (403 aa).

Residues 1–25 (MALRSAQGDGPTSGHWDGGAEKADF) form a disordered region. Residues 60-246 (LLTDEIRRKV…RLYDFFLACH (187 aa)) form the Rab-GAP TBC domain. The next 2 helical transmembrane spans lie at 238-258 (LYDFFLACHPLMPIYFAAVIV) and 367-387 (FVKLAVMGLTVALGAAALAVV).

In terms of assembly, (Microbial infection) Directly interacts with the N-terminal amphipathic helix of hepatitis C virus (HCV) NS5A.

The protein resides in the membrane. In terms of biological role, GTPase-activating protein (GAP) specific for Rab1 and Rab2 small GTPase families for which it can accelerate the intrinsic GTP hydrolysis rate by more than five orders of magnitude. Also shows GAP activity for RAB18 GTPase. Promotes RAB18 dissociation from the endoplasmic reticulum (ER) membrane into the cytosol, probably through stimulating RAB18 GTP-hydrolysis. Involved in maintaining endoplasmic reticulum structure. The chain is TBC1 domain family member 20 from Homo sapiens (Human).